Here is a 291-residue protein sequence, read N- to C-terminus: 4-hydroxy-tetrahydrodipicolinate synthase (291 aa).

Thr-45 is a binding site for pyruvate. Tyr-131 serves as the catalytic Proton donor/acceptor. The active-site Schiff-base intermediate with substrate is Lys-159. Ile-202 contributes to the pyruvate binding site.

The protein belongs to the DapA family. Homotetramer; dimer of dimers.

It localises to the cytoplasm. The enzyme catalyses L-aspartate 4-semialdehyde + pyruvate = (2S,4S)-4-hydroxy-2,3,4,5-tetrahydrodipicolinate + H2O + H(+). It participates in amino-acid biosynthesis; L-lysine biosynthesis via DAP pathway; (S)-tetrahydrodipicolinate from L-aspartate: step 3/4. In terms of biological role, catalyzes the condensation of (S)-aspartate-beta-semialdehyde [(S)-ASA] and pyruvate to 4-hydroxy-tetrahydrodipicolinate (HTPA). The sequence is that of 4-hydroxy-tetrahydrodipicolinate synthase from Methanosarcina acetivorans (strain ATCC 35395 / DSM 2834 / JCM 12185 / C2A).